The primary structure comprises 546 residues: Glucose-6-phosphate isomerase 1 (546 aa).

The active-site Proton donor is glutamate 353. Residues histidine 384 and lysine 512 contribute to the active site.

The protein belongs to the GPI family.

The protein localises to the cytoplasm. It carries out the reaction alpha-D-glucose 6-phosphate = beta-D-fructose 6-phosphate. It participates in carbohydrate biosynthesis; gluconeogenesis. It functions in the pathway carbohydrate degradation; glycolysis; D-glyceraldehyde 3-phosphate and glycerone phosphate from D-glucose: step 2/4. Functionally, catalyzes the reversible isomerization of glucose-6-phosphate to fructose-6-phosphate. This chain is Glucose-6-phosphate isomerase 1, found in Colwellia psychrerythraea (strain 34H / ATCC BAA-681) (Vibrio psychroerythus).